The primary structure comprises 140 residues: MAKTIRRYSSFRLRNRRIRSRKSARKIPKGIIHVQASFSNTIVTVTDVGGRVVTSASAGACGFKGRRRGTPFAAQTTAENAIRTVVTQGMHRAVVLVKGVGRGRDAALRAILRSGVRLHLLRDRTPLPHNGCRPPKRRRT.

This sequence belongs to the universal ribosomal protein uS11 family. As to quaternary structure, part of the 30S ribosomal subunit.

It is found in the plastid. The protein localises to the chloroplast. The protein is Small ribosomal subunit protein uS11c of Pelargonium hortorum (Common geranium).